The primary structure comprises 507 residues: Sugar transport protein 6 (507 aa).

The Cytoplasmic segment spans residues 1–20; that stretch reads MAVVVSNANAPAFEAKMTVY. The next 12 membrane-spanning stretches (helical) occupy residues 21–41, 78–98, 115–135, 138–158, 165–185, 199–219, 280–300, 318–338, 345–365, 381–401, 418–438, and 447–467; these read VFICVMIAAVGGLIFGYDIGI, FLQLFTSSLYLAALVASFVAS, IFFLIGVGLTAGAVNLVMLII, LFLGFGVGFGNQAVPLFLSEI, GGLNIVFQLMVTIGILIANIV, IALGGAGIPAVILLFGSLLII, FIIGMLLQLFQQFTGINAIMF, LSAVITGSINVLATFVGIYLV, FLLLQSSVHMLICQLIIGIIL, LVVVIFVCVYVMGFAWSWGPL, GFAVAVSCNMFFTFVIAQAFL, and GIFFFFSGWIIVMGLFAFFFI. Topologically, residues 468–507 are cytoplasmic; that stretch reads PETKGIAIDDMRESVWKPHWFWKRYMLPEDDHHDIEKRNA.

Belongs to the major facilitator superfamily. Sugar transporter (TC 2.A.1.1) family. In terms of tissue distribution, pollen specific.

The protein resides in the membrane. Inhibited by uncouplers such as 2,4-dinitrophenol and carbonyl cyanide-m-chlorophenyl-hydrazone. Its function is as follows. Mediates an active uptake of hexoses, probably by sugar/hydrogen symport. Can transport glucose, 3-O-methylglucose, mannose, fructose and galactose, and, to a lower extent, xylose and ribulose. The protein is Sugar transport protein 6 (STP6) of Arabidopsis thaliana (Mouse-ear cress).